A 67-amino-acid chain; its full sequence is Large ribosomal subunit protein bL35 (67 aa).

The protein belongs to the bacterial ribosomal protein bL35 family.

The sequence is that of Large ribosomal subunit protein bL35 from Mesorhizobium japonicum (strain LMG 29417 / CECT 9101 / MAFF 303099) (Mesorhizobium loti (strain MAFF 303099)).